Consider the following 359-residue polypeptide: 3-dehydroquinate synthase (359 aa).

Residues 71–76 (DGEQYK), 105–109 (GVIGD), 129–130 (TT), Lys142, Lys151, and 169–172 (CLST) each bind NAD(+). Glu184, His247, and His264 together coordinate Zn(2+).

It belongs to the sugar phosphate cyclases superfamily. Dehydroquinate synthase family. The cofactor is Co(2+). Zn(2+) is required as a cofactor. NAD(+) serves as cofactor.

Its subcellular location is the cytoplasm. The catalysed reaction is 7-phospho-2-dehydro-3-deoxy-D-arabino-heptonate = 3-dehydroquinate + phosphate. It functions in the pathway metabolic intermediate biosynthesis; chorismate biosynthesis; chorismate from D-erythrose 4-phosphate and phosphoenolpyruvate: step 2/7. In terms of biological role, catalyzes the conversion of 3-deoxy-D-arabino-heptulosonate 7-phosphate (DAHP) to dehydroquinate (DHQ). The polypeptide is 3-dehydroquinate synthase (Shewanella piezotolerans (strain WP3 / JCM 13877)).